The following is a 434-amino-acid chain: Double-stranded RNA-binding protein 2 (434 aa).

DRBM domains are found at residues 1–70 (MYKN…ALSN) and 87–155 (VYKN…SLKQ). Residues 402–434 (EKTASKETERAEFKDSSKGEPETARERLENLKI) are disordered.

Heterodimer with DRB1 or DRB5. Interacts with DCL1 and DCL5.

The protein localises to the cytoplasm. In terms of biological role, binds double-stranded RNA. May be involved in RNA-mediated silencing. This Arabidopsis thaliana (Mouse-ear cress) protein is Double-stranded RNA-binding protein 2 (DRB2).